A 627-amino-acid chain; its full sequence is Transducer protein MpcT (627 aa).

2 helical membrane passes run 28–48 and 55–75; these read MLTA…LTVF and LIGV…TYLI. HAMP domains lie at 78 to 132 and 192 to 247; these read ADFV…VASR and EQLR…DTIS. Residues 266 to 502 enclose the Methyl-accepting transducer domain; sequence RVDAVADRSA…DVVGMVEEVA (237 aa). Residues Glu310, Glu416, and Glu507 each carry the glutamate methyl ester (Glu) modification. 2 disordered regions span residues 505–527 and 557–627; these read SEET…DATD and GTAD…ADSQ. The span at 580–590 shows a compositional bias: low complexity; that stretch reads AAAVVDQPQPA.

This sequence belongs to the methyl-accepting chemotaxis (MCP) protein family. Interacts with CheA, CheY and CheW1. In terms of processing, methylated by CheR.

It localises to the cell membrane. In terms of biological role, mediates bacteriorhodopsin- and halorhodopsin-dependent photoresponses by detecting membrane potential changes. Probably transduces the signal to the histidine kinase CheA. The polypeptide is Transducer protein MpcT (mpcT) (Halobacterium salinarum (strain ATCC 29341 / DSM 671 / R1)).